A 621-amino-acid chain; its full sequence is Chaperone protein HscA homolog (621 aa).

The protein belongs to the heat shock protein 70 family.

Functionally, chaperone involved in the maturation of iron-sulfur cluster-containing proteins. Has a low intrinsic ATPase activity which is markedly stimulated by HscB. The polypeptide is Chaperone protein HscA homolog (Ralstonia pickettii (strain 12J)).